A 180-amino-acid polypeptide reads, in one-letter code: Large ribosomal subunit protein bL17 (180 aa).

Residues 134–180 form a disordered region; it reads AQAKAKKAAAMPTEESEAKPAEEGDVVGASEPDAKAPEEPPAEAPEN.

This sequence belongs to the bacterial ribosomal protein bL17 family. Part of the 50S ribosomal subunit. Contacts protein L32.

The chain is Large ribosomal subunit protein bL17 from Mycobacterium tuberculosis (strain ATCC 25177 / H37Ra).